The following is a 358-amino-acid chain: Membrane-bound lytic murein transglycosylase C (358 aa).

The first 16 residues, 1–16, serve as a signal peptide directing secretion; that stretch reads MKKILALLVIAPLLVS. Cys-17 carries the N-palmitoyl cysteine lipid modification. The S-diacylglycerol cysteine moiety is linked to residue Cys-17.

The protein belongs to the transglycosylase Slt family.

Its subcellular location is the cell outer membrane. The enzyme catalyses Exolytic cleavage of the (1-&gt;4)-beta-glycosidic linkage between N-acetylmuramic acid (MurNAc) and N-acetylglucosamine (GlcNAc) residues in peptidoglycan, from either the reducing or the non-reducing ends of the peptidoglycan chains, with concomitant formation of a 1,6-anhydrobond in the MurNAc residue.. Murein-degrading enzyme. May play a role in recycling of muropeptides during cell elongation and/or cell division. The sequence is that of Membrane-bound lytic murein transglycosylase C from Yersinia enterocolitica serotype O:8 / biotype 1B (strain NCTC 13174 / 8081).